The chain runs to 293 residues: Nucleotide-binding protein BcerKBAB4_4948 (293 aa).

ATP is bound at residue 14–21; the sequence is GMSGAGKT. GTP is bound at residue 65–68; it reads DLRG.

This sequence belongs to the RapZ-like family.

Displays ATPase and GTPase activities. This chain is Nucleotide-binding protein BcerKBAB4_4948, found in Bacillus mycoides (strain KBAB4) (Bacillus weihenstephanensis).